Consider the following 448-residue polypeptide: NADP-specific glutamate dehydrogenase (448 aa).

Lys-88, Gln-109, and Lys-112 together coordinate substrate. Residue Lys-124 is the Proton donor of the active site. A substrate-binding site is contributed by Gly-163. Residues Thr-207 and Asn-238 each contribute to the NADP(+) site. Ser-375 contributes to the substrate binding site.

This sequence belongs to the Glu/Leu/Phe/Val dehydrogenases family. As to quaternary structure, homohexamer.

The enzyme catalyses L-glutamate + NADP(+) + H2O = 2-oxoglutarate + NH4(+) + NADPH + H(+). Catalyzes the reversible oxidative deamination of glutamate to alpha-ketoglutarate and ammonia. The polypeptide is NADP-specific glutamate dehydrogenase (gdhA) (Psychrobacter sp. (strain TAD1)).